A 279-amino-acid polypeptide reads, in one-letter code: Tryptophan 2,3-dioxygenase (279 aa).

Substrate contacts are provided by residues 48–52 (FIIQH), Tyr110, and Arg114. A heme-binding site is contributed by His237. Thr251 serves as a coordination point for substrate.

Belongs to the tryptophan 2,3-dioxygenase family. In terms of assembly, homotetramer. It depends on heme as a cofactor.

The enzyme catalyses L-tryptophan + O2 = N-formyl-L-kynurenine. It participates in amino-acid degradation; L-tryptophan degradation via kynurenine pathway; L-kynurenine from L-tryptophan: step 1/2. Heme-dependent dioxygenase that catalyzes the oxidative cleavage of the L-tryptophan (L-Trp) pyrrole ring and converts L-tryptophan to N-formyl-L-kynurenine. Catalyzes the oxidative cleavage of the indole moiety. This chain is Tryptophan 2,3-dioxygenase, found in Ruegeria sp. (strain TM1040) (Silicibacter sp.).